A 243-amino-acid polypeptide reads, in one-letter code: Small ribosomal subunit protein uS3 (243 aa).

Residues 22-93 (LNEFLTRELA…SVELYAEKVA (72 aa)) enclose the KH type-2 domain. The disordered stretch occupies residues 195–243 (QQGKNGPKKPQPDHILVTEPKDEPAPLEPTSDIRSLAPAPLPQPVAAVA).

The protein belongs to the universal ribosomal protein uS3 family.

The protein is Small ribosomal subunit protein uS3 (RpS3) of Manduca sexta (Tobacco hawkmoth).